Reading from the N-terminus, the 928-residue chain is Autophagy-related protein 9 (928 aa).

Topologically, residues 1–295 (MEQSGHEPGK…NGFHCIILQK (295 aa)) are cytoplasmic. Disordered regions lie at residues 28 to 118 (SIHT…PFGS) and 188 to 216 (NDVKKNSTKKRQNSHNYNPTSTYTNSSSN). A compositionally biased stretch (acidic residues) spans 77–86 (LESDTSEEDE). Polar residues predominate over residues 90–99 (GINSDSQVID). Residues 201–216 (SHNYNPTSTYTNSSSN) show a composition bias toward low complexity. Residues 296 to 316 (VLNILTLLFVVFVSSFMGYCV) form a helical membrane-spanning segment. The Lumenal portion of the chain corresponds to 317–345 (DYSKLPTSTRFSEIKIDHCYSQNITGFTK). N-linked (GlcNAc...) asparagine glycosylation is present at asparagine 339. A helical transmembrane segment spans residues 346–366 (FLLFLFYGFVILKVIQLYFDI). The Cytoplasmic portion of the chain corresponds to 367–507 (NNIREMKLFY…NELRKRFMLA (141 aa)). The stretch at 508–528 (GFLNIILSPFLVSYFVLLYFF) is an intramembrane region. At 529 to 588 (RYFNEYKTSPENIGARQYTPMAEWKFREYNELYHIFRKRIGLSNPLASKYVDQFPKEKTN) the chain is on the cytoplasmic side. A helical membrane pass occupies residues 589–609 (ILLKFVSFISGSFVAILAILA). Over 610-625 (LWDPENFLNFEVTHDK) the chain is Lumenal. A helical membrane pass occupies residues 626 to 646 (TVLFYITVLGAIWSISQGSVS). Over 647 to 692 (TEYHVFDPEETLRELAEYTHYLPDSWKDRYHTEGVKQEFCELYNLR) the chain is Cytoplasmic. Residues 693 to 713 (ITVLLRELASLITTPFILWFS) lie within the membrane without spanning it. Residues 714–928 (LPNSAGKMVD…EYYKKSDVGR (215 aa)) are Cytoplasmic-facing. Residues 755-779 (FGTDGNETTEQDAATEEQDIDSEPD) are disordered. The segment covering 761–779 (ETTEQDAATEEQDIDSEPD) has biased composition (acidic residues).

Belongs to the ATG9 family. Homotrimer; forms a homotrimer with a central pore that forms a path between the two membrane leaflets. Phosphorylated by ATG1. ATG1 phosphorylation is required for preautophagosome elongation.

The protein localises to the preautophagosomal structure membrane. Its subcellular location is the cytoplasmic vesicle membrane. It is found in the golgi apparatus membrane. The protein resides in the endoplasmic reticulum membrane. The enzyme catalyses a 1,2-diacyl-sn-glycero-3-phosphocholine(in) = a 1,2-diacyl-sn-glycero-3-phosphocholine(out). The catalysed reaction is a 1,2-diacyl-sn-glycero-3-phospho-L-serine(in) = a 1,2-diacyl-sn-glycero-3-phospho-L-serine(out). It carries out the reaction a 1,2-diacyl-sn-glycero-3-phosphoethanolamine(in) = a 1,2-diacyl-sn-glycero-3-phosphoethanolamine(out). It catalyses the reaction a 1,2-diacyl-sn-glycero-3-phospho-(1D-myo-inositol-3-phosphate)(in) = a 1,2-diacyl-sn-glycero-3-phospho-(1D-myo-inositol-3-phosphate)(out). Functionally, phospholipid scramblase involved in autophagy and cytoplasm to vacuole transport (Cvt) vesicle formation. Cycles between the preautophagosomal structure/phagophore assembly site (PAS) and the cytoplasmic vesicle pool and supplies membrane for the growing autophagosome. Lipid scramblase activity plays a key role in preautophagosomal structure/phagophore assembly by distributing the phospholipids that arrive through ATG2 from the cytoplasmic to the luminal leaflet of the bilayer, thereby driving autophagosomal membrane expansion. Required for mitophagy. Also involved in endoplasmic reticulum-specific autophagic process and is essential for the survival of cells subjected to severe ER stress. Different machineries are required for anterograde trafficking to the PAS during either the Cvt pathway or bulk autophagy and for retrograde trafficking. In Candida glabrata (strain ATCC 2001 / BCRC 20586 / JCM 3761 / NBRC 0622 / NRRL Y-65 / CBS 138) (Yeast), this protein is Autophagy-related protein 9 (ATG9).